Reading from the N-terminus, the 938-residue chain is Protocadherin gamma-C4 (938 aa).

An N-terminal signal peptide occupies residues 1-29 (MLRKVRSWTEIWRWATLLFLFYHLGYVCG). 6 Cadherin domains span residues 30 to 133 (QIRY…APRF), 134 to 242 (PRQQ…APAF), 243 to 350 (QQSS…APYI), 351 to 455 (TVTS…PPSF), 456 to 565 (FQRS…APAV), and 572 to 676 (PGSL…VPDL). The Extracellular portion of the chain corresponds to 30–692 (QIRYPVPEES…REGESRLTLY (663 aa)). Asn265, Asn276, and Asn444 each carry an N-linked (GlcNAc...) asparagine glycan. The chain crosses the membrane as a helical span at residues 693-713 (LAVSLVAICFVSFGSFVALLS). Residues 714 to 938 (KCLRGAACGV…KKKSGKKEKK (225 aa)) lie on the Cytoplasmic side of the membrane. Disordered stretches follow at residues 791-847 (PSAP…WPNN) and 908-938 (ATLT…KEKK). The segment covering 822–847 (WRFSQAQRPGTSGSQNGDDTGTWPNN) has biased composition (polar residues). Residues 928-938 (NKKKSGKKEKK) are compositionally biased toward basic residues.

The protein resides in the cell membrane. In terms of biological role, potential calcium-dependent cell-adhesion protein. May be involved in the establishment and maintenance of specific neuronal connections in the brain. In Homo sapiens (Human), this protein is Protocadherin gamma-C4 (PCDHGC4).